The primary structure comprises 150 residues: UPF0201 protein APE_1751 (150 aa).

This sequence belongs to the UPF0201 family.

This is UPF0201 protein APE_1751 from Aeropyrum pernix (strain ATCC 700893 / DSM 11879 / JCM 9820 / NBRC 100138 / K1).